The chain runs to 830 residues: DNA replication licensing factor MCM6 (830 aa).

The C4-type zinc-finger motif lies at 159 to 186 (CLDCGNVVKNVEQQFKYTEPIICVNATC). The MCM domain occupies 349 to 555 (FFNKIVDSIC…NTDYHIAHHI (207 aa)). 399-406 (GDPSCAKS) serves as a coordination point for ATP. The Arginine finger motif lies at 531-534 (SRFD). Residues 671 to 710 (DFQDADDGTNVPADNDAGQPTEMDAAPQQDGPENEQAADT) are disordered.

It belongs to the MCM family. In terms of assembly, component of the minichromosome maintenance (MCM) complex, a heterotetramer composed of MCM2, MCM3, MCM4, MCM5, MCM6 and MCM7.

It is found in the nucleus. It catalyses the reaction ATP + H2O = ADP + phosphate + H(+). Probable component of the MCM2-7 complex (MCM complex) that may function as a DNA helicase and which is essential to undergo a single round of replication initiation and elongation per cell cycle in eukaryotic cells. This Oryza sativa subsp. indica (Rice) protein is DNA replication licensing factor MCM6 (MCM6).